The sequence spans 333 residues: 4-hydroxy-3-methylbut-2-enyl diphosphate reductase (333 aa).

Cys-20 is a [4Fe-4S] cluster binding site. (2E)-4-hydroxy-3-methylbut-2-enyl diphosphate contacts are provided by His-49 and His-85. The dimethylallyl diphosphate site is built by His-49 and His-85. Isopentenyl diphosphate-binding residues include His-49 and His-85. Position 107 (Cys-107) interacts with [4Fe-4S] cluster. His-135 contributes to the (2E)-4-hydroxy-3-methylbut-2-enyl diphosphate binding site. His-135 contacts dimethylallyl diphosphate. An isopentenyl diphosphate-binding site is contributed by His-135. Glu-137 acts as the Proton donor in catalysis. Residue Thr-176 participates in (2E)-4-hydroxy-3-methylbut-2-enyl diphosphate binding. [4Fe-4S] cluster is bound at residue Cys-206. (2E)-4-hydroxy-3-methylbut-2-enyl diphosphate contacts are provided by Ser-234, Ser-235, Asn-236, and Ser-279. The dimethylallyl diphosphate site is built by Ser-234, Ser-235, Asn-236, and Ser-279. Isopentenyl diphosphate contacts are provided by Ser-234, Ser-235, Asn-236, and Ser-279.

This sequence belongs to the IspH family. It depends on [4Fe-4S] cluster as a cofactor.

It carries out the reaction isopentenyl diphosphate + 2 oxidized [2Fe-2S]-[ferredoxin] + H2O = (2E)-4-hydroxy-3-methylbut-2-enyl diphosphate + 2 reduced [2Fe-2S]-[ferredoxin] + 2 H(+). The enzyme catalyses dimethylallyl diphosphate + 2 oxidized [2Fe-2S]-[ferredoxin] + H2O = (2E)-4-hydroxy-3-methylbut-2-enyl diphosphate + 2 reduced [2Fe-2S]-[ferredoxin] + 2 H(+). Its pathway is isoprenoid biosynthesis; dimethylallyl diphosphate biosynthesis; dimethylallyl diphosphate from (2E)-4-hydroxy-3-methylbutenyl diphosphate: step 1/1. The protein operates within isoprenoid biosynthesis; isopentenyl diphosphate biosynthesis via DXP pathway; isopentenyl diphosphate from 1-deoxy-D-xylulose 5-phosphate: step 6/6. Functionally, catalyzes the conversion of 1-hydroxy-2-methyl-2-(E)-butenyl 4-diphosphate (HMBPP) into a mixture of isopentenyl diphosphate (IPP) and dimethylallyl diphosphate (DMAPP). Acts in the terminal step of the DOXP/MEP pathway for isoprenoid precursor biosynthesis. This chain is 4-hydroxy-3-methylbut-2-enyl diphosphate reductase, found in Rhizobium leguminosarum bv. trifolii (strain WSM2304).